The primary structure comprises 141 residues: Photosystem I reaction center subunit IV A, chloroplastic (141 aa).

The N-terminal 49 residues, methionine 1 to arginine 49, are a transit peptide targeting the chloroplast. A compositionally biased stretch (low complexity) spans proline 57–alanine 73. Residues proline 57–glycine 83 are disordered.

The protein belongs to the PsaE family. 2 isoforms exists (ratio 1:1). With or without the N-terminal alanine.

It localises to the plastid. The protein localises to the chloroplast thylakoid membrane. In terms of biological role, stabilizes the interaction between PsaC and the PSI core, assists the docking of the ferredoxin to PSI and interacts with ferredoxin-NADP oxidoreductase. The sequence is that of Photosystem I reaction center subunit IV A, chloroplastic (PSAEA) from Nicotiana sylvestris (Wood tobacco).